A 368-amino-acid chain; its full sequence is MPSDSCLLSLTVLQRLRAICPPLSTFYLFFVIFVVSTIFHCHRRLGLVPAPWASPSLVVFPPRHMPREGMFTIRVKGRLGNQMGEYATLFALARMNGRLAFIPASMHSTLAPIFRISLPVLHSDTAKRIPWQNYHLNDWMEERYRHIPGHYVRFTGYPCSWTFYHHLRPEILKEFTLHDHVREEAQAFLRGLQVNGSQPSTFVGVHVRRGDYVRVMPKVWKGVVADRGYLEKALDRFRARYSSPVFVVTSDDMAWCRKSITASRGDVAFAGNGLQGSPAKDIALLMQCNHTVITLGTFGIWAAYLTGGDTVYLANFTQPNSPFHTVFKPEAAYLPEWVGIAADLGQPNTVGSGHASARAPKRHWGALL.

Residues 1–20 (MPSDSCLLSLTVLQRLRAIC) are Cytoplasmic-facing. The helical; Signal-anchor for type II membrane protein transmembrane segment at 21-41 (PPLSTFYLFFVIFVVSTIFHC) threads the bilayer. Residues 42 to 368 (HRRLGLVPAP…APKRHWGALL (327 aa)) are Lumenal-facing. N-linked (GlcNAc...) asparagine glycosylation is found at N195, N289, and N315.

It belongs to the glycosyltransferase 11 family.

The protein resides in the golgi apparatus. It localises to the golgi stack membrane. The enzyme catalyses a ganglioside GM1 + GDP-beta-L-fucose = a ganglioside Fuc-GM1 + GDP + H(+). Its pathway is protein modification; protein glycosylation. Functionally, catalyzes the transfer of alpha 1,2-linked fucose to ganglioside GM1 and galacto-N-biose. This is Galactoside 2-alpha-L-fucosyltransferase Sec1 from Mus musculus (Mouse).